We begin with the raw amino-acid sequence, 608 residues long: Dihydroxy-acid dehydratase, chloroplastic (608 aa).

The N-terminal 34 residues, 1 to 34 (MQATIFSPRATLFPCKPLLPSHNVNSRRPSIISC), are a transit peptide targeting the chloroplast. S35 is modified (N-acetylserine). C100 contacts [2Fe-2S] cluster. Residue D132 participates in Mg(2+) binding. C173 contributes to the [2Fe-2S] cluster binding site. D174 provides a ligand contact to Mg(2+). Position 245 (C245) interacts with [2Fe-2S] cluster. E497 provides a ligand contact to Mg(2+). The active-site Proton acceptor is S523.

The protein belongs to the IlvD/Edd family. [2Fe-2S] cluster serves as cofactor. Requires Mg(2+) as cofactor.

It localises to the plastid. It is found in the chloroplast. It catalyses the reaction (2R)-2,3-dihydroxy-3-methylbutanoate = 3-methyl-2-oxobutanoate + H2O. The catalysed reaction is (2R,3R)-2,3-dihydroxy-3-methylpentanoate = (S)-3-methyl-2-oxopentanoate + H2O. It participates in amino-acid biosynthesis; L-isoleucine biosynthesis; L-isoleucine from 2-oxobutanoate: step 3/4. Its pathway is amino-acid biosynthesis; L-valine biosynthesis; L-valine from pyruvate: step 3/4. With respect to regulation, is highly competitively inhibited by the fungal sesquiterpenoid aspterric acid, which is effective as a herbicide in spray applications. Its function is as follows. Functions in the biosynthesis of branched-chain amino acids. Catalyzes the dehydration of (2R,3R)-2,3-dihydroxy-3-methylpentanoate (2,3-dihydroxy-3-methylvalerate) into 2-oxo-3-methylpentanoate (2-oxo-3-methylvalerate) and of (2R)-2,3-dihydroxy-3-methylbutanoate (2,3-dihydroxyisovalerate) into 2-oxo-3-methylbutanoate (2-oxoisovalerate), the penultimate precursor to L-isoleucine and L-valine, respectively. The polypeptide is Dihydroxy-acid dehydratase, chloroplastic (Arabidopsis thaliana (Mouse-ear cress)).